The primary structure comprises 354 residues: DNA integrity scanning protein DisA (354 aa).

Residues 6–144 (EKELKSILKL…GHIKYVLRDS (139 aa)) form the DAC domain. ATP-binding positions include G73, L91, and 104 to 108 (TRHRT).

This sequence belongs to the DisA family. Homooctamer. Mg(2+) is required as a cofactor.

The enzyme catalyses 2 ATP = 3',3'-c-di-AMP + 2 diphosphate. Participates in a DNA-damage check-point that is active prior to asymmetric division when DNA is damaged. DisA forms globular foci that rapidly scan along the chromosomes during sporulation, searching for lesions. When a lesion is present, DisA pauses at the lesion site. This triggers a cellular response that culminates in a temporary block in sporulation initiation. Its function is as follows. Also has diadenylate cyclase activity, catalyzing the condensation of 2 ATP molecules into cyclic di-AMP (c-di-AMP). c-di-AMP acts as a signaling molecule that couples DNA integrity with progression of sporulation. The rise in c-di-AMP level generated by DisA while scanning the chromosome, operates as a positive signal that advances sporulation; upon encountering a lesion, the DisA focus arrests at the damaged site and halts c-di-AMP synthesis. In Clostridium kluyveri (strain ATCC 8527 / DSM 555 / NBRC 12016 / NCIMB 10680 / K1), this protein is DNA integrity scanning protein DisA.